Reading from the N-terminus, the 1346-residue chain is Cytokinesis protein sepH (1346 aa).

Residues 1-50 form a disordered region; it reads MVSRSNEGPEAPHPASRTPGAPAKGRLTRLGSSPSKRDDKAKDDRMGKTS. The span at 35-50 shows a compositional bias: basic and acidic residues; the sequence is SKRDDKAKDDRMGKTS. The Protein kinase domain occupies 60–310; sequence YQLGDCLGRG…ARKLLKHPWI (251 aa). ATP is bound by residues 66 to 74 and Lys89; that span reads LGRGAFGSV. Asp182 functions as the Proton acceptor in the catalytic mechanism. 3 disordered regions span residues 342 to 380, 446 to 497, and 1211 to 1295; these read RSPE…PSPV, DESF…HMRR, and LCKL…AGAS. Composition is skewed to polar residues over residues 477–489 and 1220–1249; these read QQAN…SQNG and RGST…NQSK.

This sequence belongs to the protein kinase superfamily. Ser/Thr protein kinase family. CDC7 subfamily. Requires Mg(2+) as cofactor.

It catalyses the reaction L-seryl-[protein] + ATP = O-phospho-L-seryl-[protein] + ADP + H(+). It carries out the reaction L-threonyl-[protein] + ATP = O-phospho-L-threonyl-[protein] + ADP + H(+). Its function is as follows. Required for early events during cytokinesis including localization of cytoskeletal components to the cytokinetic ring. The chain is Cytokinesis protein sepH from Emericella nidulans (strain FGSC A4 / ATCC 38163 / CBS 112.46 / NRRL 194 / M139) (Aspergillus nidulans).